The following is a 177-amino-acid chain: CRIB domain-containing protein RIC8 (177 aa).

The region spanning 17–30 (IGTPTDVKHVAHIG) is the CRIB domain. Basic and acidic residues predominate over residues 72–89 (STRSRDIPRLPKSSRERS). Residues 72 to 177 (STRSRDIPRL…SSTSDAGYLT (106 aa)) are disordered. Over residues 158-171 (GSQVESISDSSSTS) the composition is skewed to low complexity.

In terms of biological role, functions as a downstream effector of Rho-related GTP binding proteins of the 'Rho of Plants' (ROPs) family. Participates in the propagation of ROP GTPase signals in specific cellular responses. In Arabidopsis thaliana (Mouse-ear cress), this protein is CRIB domain-containing protein RIC8 (RIC8).